A 67-amino-acid chain; its full sequence is Type 3 secretion system chaperone PscE (67 aa).

Positions 16–37 form a coiled coil; it reads HAAALRQRLQAALAECRRELAR.

The protein belongs to the YscE family. In terms of assembly, forms a stable ternary complex with PscF/SctF and PscG within the cytoplasm. Co-stabilized by PscG.

It localises to the cytoplasm. Chaperone of the type III secretion system (T3SS), also called injectisome, which is used to inject bacterial effector proteins into eukaryotic host cells, facilitating the establishment and dissemination of infection. Along with PscG, prevents premature polymerization of the PscF/SctF needle protein within the cytoplasm. Required for type III secretion needle assembly. Also required for cytotoxicity by influencing PscF/SctF levels. In Pseudomonas aeruginosa (strain ATCC 15692 / DSM 22644 / CIP 104116 / JCM 14847 / LMG 12228 / 1C / PRS 101 / PAO1), this protein is Type 3 secretion system chaperone PscE (pscE).